We begin with the raw amino-acid sequence, 273 residues long: Undecaprenyl-diphosphatase (273 aa).

A run of 7 helical transmembrane segments spans residues 13–35 (GLVE…VFGN), 45–62 (VFEI…VFEY), 82–102 (FVLN…LFDK), 108–128 (LFNP…ILWV), 186–206 (TEFS…YDVL), 219–239 (LILI…KALL), and 250–270 (FAYY…SGWI).

This sequence belongs to the UppP family.

The protein resides in the cell inner membrane. It catalyses the reaction di-trans,octa-cis-undecaprenyl diphosphate + H2O = di-trans,octa-cis-undecaprenyl phosphate + phosphate + H(+). Functionally, catalyzes the dephosphorylation of undecaprenyl diphosphate (UPP). Confers resistance to bacitracin. The chain is Undecaprenyl-diphosphatase from Neisseria gonorrhoeae (strain NCCP11945).